The primary structure comprises 487 residues: L-asparagine permease 2 (487 aa).

A run of 12 helical transmembrane segments spans residues 26 to 46 (QLQM…GAGG), 50 to 70 (SAGP…FLIL), 98 to 118 (VAFV…IVDT), 133 to 153 (PIPQ…MNLI), 163 to 183 (FWAS…GTVF), 214 to 234 (IVLV…VGIA), 256 to 276 (IACF…YTAY), 290 to 310 (IGID…ALSS), 341 to 361 (TGVP…GIIL), 369 to 389 (AFEI…ATIV), 414 to 434 (SPFS…LMYF), and 440 to 460 (PWMI…WYLV).

Belongs to the amino acid-polyamine-organocation (APC) superfamily. Amino acid transporter (AAT) (TC 2.A.3.1) family.

It is found in the cell membrane. Its function is as follows. Dual function in both nitrogen assimilation and in protection against acid stress during infection. Involved in asparagine uptake. The sequence is that of L-asparagine permease 2 (ansP2) from Mycobacterium bovis (strain ATCC BAA-935 / AF2122/97).